A 675-amino-acid chain; its full sequence is PTS system glucose-specific EIICBA component (675 aa).

Residues 3–414 form the PTS EIIC type-1 domain; it reads KKLFGQLQRI…FNFKTPGRED (412 aa). Transmembrane regions (helical) follow at residues 16-36, 59-79, 81-101, 126-146, 173-193, 199-219, 273-293, 303-323, 328-348, 355-375, and 378-398; these read LMLPVAILPAAGLLLAIGTAF, MMTGAGGIIFDNLPIIFALGV, IGLAGGDGVAAIAAFVGFIIM, VLGIPTLQTGVFGGIIIGALA, IMMATTSFILAFPMAWIWPFI, AFSTGLLDSNTGLAVFLFGFI, FMQGEFPVMMFGLPAAALAIY, VVGGLMLSAALTSFLTGITEP, FLFVAPLLFFIHAVLDGLSFL, LHLGYTFSGGFIDFVLLGILP, and TPWWLVIPVGLVYAVIYYVVF. Residues 425–506 form the PTS EIIB type-1 domain; that stretch reads SKLPFDVLDA…ARIMNGDITK (82 aa). C447 functions as the Phosphocysteine intermediate; for EIIB activity in the catalytic mechanism. The PTS EIIA type-1 domain maps to 547 to 651; it reads DKVFSEKMMG…SVVTPVIITN (105 aa). Catalysis depends on H599, which acts as the Tele-phosphohistidine intermediate; for EIIA activity.

It localises to the cell membrane. The enzyme catalyses N(pros)-phospho-L-histidyl-[protein] + D-glucose(out) = D-glucose 6-phosphate(in) + L-histidyl-[protein]. In terms of biological role, the phosphoenolpyruvate-dependent sugar phosphotransferase system (sugar PTS), a major carbohydrate active transport system, catalyzes the phosphorylation of incoming sugar substrates concomitantly with their translocation across the cell membrane. This system is involved in glucose transport. The chain is PTS system glucose-specific EIICBA component (ptsG) from Staphylococcus haemolyticus (strain JCSC1435).